The sequence spans 641 residues: Mannosyl-oligosaccharide 1,2-alpha-mannosidase IB (641 aa).

An N-acetylthreonine modification is found at T2. Residues 2 to 36 (TTPALLPLSGRRIPPLNLGPPSFPHHRATLRLSEK) lie on the Cytoplasmic side of the membrane. A helical; Signal-anchor for type II membrane protein transmembrane segment spans residues 37-57 (FILLLILSAFITLCFGAFFFL). Residues 58–641 (PDSSKHKRFD…STLSGNPAVR (584 aa)) lie on the Lumenal side of the membrane. C462 and C494 are oxidised to a cystine. E508 acts as the Proton donor in catalysis. Ca(2+) is bound at residue T619. The N-linked (GlcNAc...) asparagine glycan is linked to N631.

It belongs to the glycosyl hydrolase 47 family. Ca(2+) serves as cofactor.

It is found in the golgi apparatus membrane. The catalysed reaction is N(4)-(alpha-D-Man-(1-&gt;2)-alpha-D-Man-(1-&gt;2)-alpha-D-Man-(1-&gt;3)-[alpha-D-Man-(1-&gt;2)-alpha-D-Man-(1-&gt;3)-[alpha-D-Man-(1-&gt;2)-alpha-D-Man-(1-&gt;6)]-alpha-D-Man-(1-&gt;6)]-beta-D-Man-(1-&gt;4)-beta-D-GlcNAc-(1-&gt;4)-beta-D-GlcNAc)-L-asparaginyl-[protein] (N-glucan mannose isomer 9A1,2,3B1,2,3) + 4 H2O = N(4)-(alpha-D-Man-(1-&gt;3)-[alpha-D-Man-(1-&gt;3)-[alpha-D-Man-(1-&gt;6)]-alpha-D-Man-(1-&gt;6)]-beta-D-Man-(1-&gt;4)-beta-D-GlcNAc-(1-&gt;4)-beta-D-GlcNAc)-L-asparaginyl-[protein] (N-glucan mannose isomer 5A1,2) + 4 beta-D-mannose. The enzyme catalyses N(4)-(alpha-D-Man-(1-&gt;2)-alpha-D-Man-(1-&gt;2)-alpha-D-Man-(1-&gt;3)-[alpha-D-Man-(1-&gt;3)-[alpha-D-Man-(1-&gt;2)-alpha-D-Man-(1-&gt;6)]-alpha-D-Man-(1-&gt;6)]-beta-D-Man-(1-&gt;4)-beta-D-GlcNAc-(1-&gt;4)-beta-D-GlcNAc)-L-asparaginyl-[protein] (N-glucan mannose isomer 8A1,2,3B1,3) + 3 H2O = N(4)-(alpha-D-Man-(1-&gt;3)-[alpha-D-Man-(1-&gt;3)-[alpha-D-Man-(1-&gt;6)]-alpha-D-Man-(1-&gt;6)]-beta-D-Man-(1-&gt;4)-beta-D-GlcNAc-(1-&gt;4)-beta-D-GlcNAc)-L-asparaginyl-[protein] (N-glucan mannose isomer 5A1,2) + 3 beta-D-mannose. It functions in the pathway protein modification; protein glycosylation. Its activity is regulated as follows. Inhibited by both 1-deoxymannojirimycin and kifunensine. Its function is as follows. Involved in the maturation of Asn-linked oligosaccharides. Progressively trim alpha-1,2-linked mannose residues from Man(9)GlcNAc(2) to produce Man(5)GlcNAc(2). In Mus musculus (Mouse), this protein is Mannosyl-oligosaccharide 1,2-alpha-mannosidase IB (Man1a2).